The chain runs to 183 residues: Apo-citrate lyase phosphoribosyl-dephospho-CoA transferase (183 aa).

This sequence belongs to the CitX family.

The catalysed reaction is apo-[citrate lyase ACP] + 2'-(5''-triphospho-alpha-D-ribosyl)-3'-dephospho-CoA = holo-[citrate lyase ACP] + diphosphate. Its function is as follows. Transfers 2-(5''-triphosphoribosyl)-3'-dephosphocoenzyme-A on a serine residue to the apo-acyl carrier protein (gamma chain) of the citrate lyase to yield holo-acyl carrier protein. The protein is Apo-citrate lyase phosphoribosyl-dephospho-CoA transferase of Citrobacter koseri (strain ATCC BAA-895 / CDC 4225-83 / SGSC4696).